We begin with the raw amino-acid sequence, 261 residues long: Glucose 1-dehydrogenase 3 (261 aa).

An NAD(+)-binding site is contributed by 11 to 35; it reads VITGGSTGLGRAMAVRFGQEEAKVV. A substrate-binding site is contributed by S145. The active-site Proton acceptor is Y158.

This sequence belongs to the short-chain dehydrogenases/reductases (SDR) family. In terms of assembly, homotetramer.

The catalysed reaction is D-glucose + NAD(+) = D-glucono-1,5-lactone + NADH + H(+). It carries out the reaction D-glucose + NADP(+) = D-glucono-1,5-lactone + NADPH + H(+). The protein is Glucose 1-dehydrogenase 3 (gdhIII) of Priestia megaterium (Bacillus megaterium).